The chain runs to 211 residues: Histidine biosynthesis bifunctional protein HisIE (211 aa).

The segment at 1-118 (MNVDDLTFDD…IYGASDRFGI (118 aa)) is phosphoribosyl-AMP cyclohydrolase. A phosphoribosyl-ATP pyrophosphohydrolase region spans residues 119 to 211 (IATLEALIAE…LEERHRPKEE (93 aa)).

It in the N-terminal section; belongs to the PRA-CH family. The protein in the C-terminal section; belongs to the PRA-PH family.

Its subcellular location is the cytoplasm. It carries out the reaction 1-(5-phospho-beta-D-ribosyl)-ATP + H2O = 1-(5-phospho-beta-D-ribosyl)-5'-AMP + diphosphate + H(+). It catalyses the reaction 1-(5-phospho-beta-D-ribosyl)-5'-AMP + H2O = 1-(5-phospho-beta-D-ribosyl)-5-[(5-phospho-beta-D-ribosylamino)methylideneamino]imidazole-4-carboxamide. Its pathway is amino-acid biosynthesis; L-histidine biosynthesis; L-histidine from 5-phospho-alpha-D-ribose 1-diphosphate: step 2/9. The protein operates within amino-acid biosynthesis; L-histidine biosynthesis; L-histidine from 5-phospho-alpha-D-ribose 1-diphosphate: step 3/9. The protein is Histidine biosynthesis bifunctional protein HisIE (hisI) of Halalkalibacterium halodurans (strain ATCC BAA-125 / DSM 18197 / FERM 7344 / JCM 9153 / C-125) (Bacillus halodurans).